The primary structure comprises 447 residues: N-succinylarginine dihydrolase (447 aa).

Residues 19 to 28 (AGLSFGNEAS), Asn-110, and 137 to 138 (HR) each bind substrate. Glu-174 is a catalytic residue. Residue Arg-212 participates in substrate binding. His-248 is an active-site residue. Residues Asp-250 and Asn-359 each coordinate substrate. The active-site Nucleophile is Cys-365.

It belongs to the succinylarginine dihydrolase family. Homodimer.

It carries out the reaction N(2)-succinyl-L-arginine + 2 H2O + 2 H(+) = N(2)-succinyl-L-ornithine + 2 NH4(+) + CO2. It participates in amino-acid degradation; L-arginine degradation via AST pathway; L-glutamate and succinate from L-arginine: step 2/5. In terms of biological role, catalyzes the hydrolysis of N(2)-succinylarginine into N(2)-succinylornithine, ammonia and CO(2). The protein is N-succinylarginine dihydrolase of Escherichia coli O81 (strain ED1a).